Reading from the N-terminus, the 379-residue chain is Cytochrome b (379 aa).

A run of 4 helical transmembrane segments spans residues 33–53 (FGSL…FLDM), 77–98 (WLIR…YLHI), 113–133 (WNIG…GYVL), and 178–198 (FFAF…VHLL). His-83 and His-97 together coordinate heme b. The heme b site is built by His-182 and His-196. Residue His-201 participates in a ubiquinone binding. Transmembrane regions (helical) follow at residues 226-246 (TKDF…VPFF), 288-308 (LGGV…PHIQ), 320-340 (ISQF…WIGG), and 347-367 (FIII…VLMP).

The protein belongs to the cytochrome b family. The cytochrome bc1 complex contains 11 subunits: 3 respiratory subunits (MT-CYB, CYC1 and UQCRFS1), 2 core proteins (UQCRC1 and UQCRC2) and 6 low-molecular weight proteins (UQCRH/QCR6, UQCRB/QCR7, UQCRQ/QCR8, UQCR10/QCR9, UQCR11/QCR10 and a cleavage product of UQCRFS1). This cytochrome bc1 complex then forms a dimer. The cofactor is heme b.

The protein localises to the mitochondrion inner membrane. Component of the ubiquinol-cytochrome c reductase complex (complex III or cytochrome b-c1 complex) that is part of the mitochondrial respiratory chain. The b-c1 complex mediates electron transfer from ubiquinol to cytochrome c. Contributes to the generation of a proton gradient across the mitochondrial membrane that is then used for ATP synthesis. This chain is Cytochrome b (MT-CYB), found in Dipodomys nelsoni (Nelson's kangaroo rat).